The sequence spans 69 residues: Amphipathic peptide CT2 (69 aa).

The first 23 residues, 1 to 23, serve as a signal peptide directing secretion; it reads MKTQFVILIVAVVLLQLIANSEA. A Phenylalanine amide modification is found at F36. The propeptide occupies 40 to 69; the sequence is GLRNLDNLDDDIFEPEMSEADLRYLQDLLR.

It belongs to the non-disulfide-bridged peptide (NDBP) superfamily. Short antimicrobial peptide (group 4) family. In terms of tissue distribution, expressed by the venom gland.

The protein localises to the secreted. It localises to the target cell membrane. Its function is as follows. Amphipathic peptide that shows antibacterial activities against both Gram-positive (MIC=10 uM, 20 uM and 20 uM against S.aureus, B.subtilis and S.agalactiae, respectively) and Gram-negative bacteria (MIC=20 uM, 10 uM, and 10 uM against E.coli, S.typhi, and P.aeruginosa, respectively). Is mildly hemolytic at its MIC range, but shows a strong cytotoxic activity at higher concentrations, reaching 84% lysis at 50 uM. The polypeptide is Amphipathic peptide CT2 (Vaejovis mexicanus smithi (Mexican scorpion)).